The sequence spans 78 residues: ATP synthase subunit c (78 aa).

Helical transmembrane passes span 11 to 31 and 53 to 73; these read FIGA…VGHV and LFVG…IALL.

This sequence belongs to the ATPase C chain family. F-type ATPases have 2 components, F(1) - the catalytic core - and F(0) - the membrane proton channel. F(1) has five subunits: alpha(3), beta(3), gamma(1), delta(1), epsilon(1). F(0) has four main subunits: a(1), b(1), b'(1) and c(10-14). The alpha and beta chains form an alternating ring which encloses part of the gamma chain. F(1) is attached to F(0) by a central stalk formed by the gamma and epsilon chains, while a peripheral stalk is formed by the delta, b and b' chains.

It is found in the cell inner membrane. Functionally, f(1)F(0) ATP synthase produces ATP from ADP in the presence of a proton or sodium gradient. F-type ATPases consist of two structural domains, F(1) containing the extramembraneous catalytic core and F(0) containing the membrane proton channel, linked together by a central stalk and a peripheral stalk. During catalysis, ATP synthesis in the catalytic domain of F(1) is coupled via a rotary mechanism of the central stalk subunits to proton translocation. Its function is as follows. Key component of the F(0) channel; it plays a direct role in translocation across the membrane. A homomeric c-ring of between 10-14 subunits forms the central stalk rotor element with the F(1) delta and epsilon subunits. This is ATP synthase subunit c from Cereibacter sphaeroides (strain ATCC 17025 / ATH 2.4.3) (Rhodobacter sphaeroides).